Here is a 340-residue protein sequence, read N- to C-terminus: Alpha-1,4-N-acetylglucosaminyltransferase (340 aa).

Residues Met-1–Glu-4 are Cytoplasmic-facing. A helical; Signal-anchor for type II membrane protein transmembrane segment spans residues Leu-5 to Leu-25. The Lumenal segment spans residues Lys-26–Lys-340. 2 N-linked (GlcNAc...) asparagine glycosylation sites follow: Asn-99 and Asn-138. The short motif at Asp-167–Asp-169 is the DXD motif element. 2 N-linked (GlcNAc...) asparagine glycosylation sites follow: Asn-251 and Asn-282.

Belongs to the glycosyltransferase 32 family. As to expression, detected in stomach and pancreas.

The protein localises to the golgi apparatus membrane. It functions in the pathway protein modification; protein glycosylation. Its function is as follows. Catalyzes the transfer of N-acetylglucosamine (GlcNAc) to core 2 branched O-glycans. Necessary for the synthesis of type III mucin which is specifically produced in the stomach, duodenum, and pancreatic duct. May protect against inflammation-associated gastric adenocarcinomas. This is Alpha-1,4-N-acetylglucosaminyltransferase (A4GNT) from Homo sapiens (Human).